A 237-amino-acid chain; its full sequence is uncharacterized protein (237 aa).

This is an uncharacterized protein from Dictyostelium discoideum (Social amoeba).